Reading from the N-terminus, the 266-residue chain is Large ribosomal subunit protein uL4 (266 aa).

Belongs to the universal ribosomal protein uL4 family. As to quaternary structure, part of the 50S ribosomal subunit.

In terms of biological role, one of the primary rRNA binding proteins, this protein initially binds near the 5'-end of the 23S rRNA. It is important during the early stages of 50S assembly. It makes multiple contacts with different domains of the 23S rRNA in the assembled 50S subunit and ribosome. Forms part of the polypeptide exit tunnel. The chain is Large ribosomal subunit protein uL4 from Sulfolobus acidocaldarius (strain ATCC 33909 / DSM 639 / JCM 8929 / NBRC 15157 / NCIMB 11770).